We begin with the raw amino-acid sequence, 304 residues long: Secreted mono- and diacylglycerol lipase MDL4 (304 aa).

Positions 1–19 (MRFGGVVSLVLGFIVSVLA) are cleaved as a signal peptide. A disulfide bond links Cys55 and Cys297. 2 N-linked (GlcNAc...) asparagine glycosylation sites follow: Asn102 and Asn161. The active-site Nucleophile is Ser171. Residue Asp228 is part of the active site. N-linked (GlcNAc...) asparagine glycosylation is present at Asn253. His281 is an active-site residue.

The protein belongs to the AB hydrolase superfamily. Lipase family. Class 3 subfamily.

It is found in the secreted. Its subcellular location is the cell wall. It carries out the reaction a monoacylglycerol + H2O = glycerol + a fatty acid + H(+). The catalysed reaction is a diacylglycerol + H2O = a monoacylglycerol + a fatty acid + H(+). Functionally, secreted lipase involved in Dandruff and seborrheic dermatitis (D/SD) probably via lipase-mediated breakdown of sebaceous lipids and release of irritating free fatty acids. Shows activity against monoglyceride and diglyceride substrates, but not triglyceride substrates and does not exhibit regio-selective production of diacylglycerols. Cleaves oleic acid from 1,2 isomers of diolein on both the 1 and the 2 position of the glycerol backbone, resulting mainly in free fatty acids but no monoolein is detected. Shows activity on monoolein and liberates mostly free fatty acids, but can also perform the reverse reaction and produce diolein. The polypeptide is Secreted mono- and diacylglycerol lipase MDL4 (Malassezia globosa (strain ATCC MYA-4612 / CBS 7966) (Dandruff-associated fungus)).